The chain runs to 265 residues: 3-methyl-2-oxobutanoate hydroxymethyltransferase (265 aa).

Mg(2+) is bound by residues D45 and D84. 3-methyl-2-oxobutanoate-binding positions include 45-46, D84, and K112; that span reads DS. Residue E114 coordinates Mg(2+). E181 acts as the Proton acceptor in catalysis.

Belongs to the PanB family. Homodecamer; pentamer of dimers. The cofactor is Mg(2+).

It is found in the cytoplasm. The catalysed reaction is 3-methyl-2-oxobutanoate + (6R)-5,10-methylene-5,6,7,8-tetrahydrofolate + H2O = 2-dehydropantoate + (6S)-5,6,7,8-tetrahydrofolate. It participates in cofactor biosynthesis; (R)-pantothenate biosynthesis; (R)-pantoate from 3-methyl-2-oxobutanoate: step 1/2. Catalyzes the reversible reaction in which hydroxymethyl group from 5,10-methylenetetrahydrofolate is transferred onto alpha-ketoisovalerate to form ketopantoate. The protein is 3-methyl-2-oxobutanoate hydroxymethyltransferase of Yersinia enterocolitica serotype O:8 / biotype 1B (strain NCTC 13174 / 8081).